Reading from the N-terminus, the 353-residue chain is N-methyltransferase (353 aa).

S-adenosyl-L-homocysteine contacts are provided by S171, A195, D218, D238, and K252. D218 provides a ligand contact to S-adenosyl-L-methionine.

This sequence belongs to the class I-like SAM-binding methyltransferase superfamily. Cation-independent O-methyltransferase family. As to quaternary structure, homodimer. As to expression, expressed at high levels in all tissues.

It carries out the reaction 3-methoxytyramine + S-adenosyl-L-methionine = N-methyl-3-methoxytyramine + S-adenosyl-L-homocysteine + H(+). The enzyme catalyses mescaline + S-adenosyl-L-methionine = N-methylmescaline + S-adenosyl-L-homocysteine + H(+). It catalyses the reaction tyramine + S-adenosyl-L-methionine = N-methyltyramine + S-adenosyl-L-homocysteine + H(+). The catalysed reaction is 4-hydroxy-3,5-dimethoxyphenethylamine + S-adenosyl-L-methionine = N-methyl-4-hydroxy-3,5-dimethoxyphenethylamine + S-adenosyl-L-homocysteine + H(+). It functions in the pathway aromatic compound metabolism. The protein operates within alkaloid biosynthesis. In terms of biological role, N-methyltransferase participating in the biosynthesis of natural products derived from phenylethylamine, including mescaline, a natural hallucinogen potentially used in psychotherapeutic treatments. Catalyzes the N-methylation of many substrates, including 3-methoxytyramine, 5-hydroxy-3,4-dimethoxyphenethylamine, 4-hydroxy-3,5-dimethoxyphenethylamine, tyramine and mescaline. This chain is N-methyltransferase, found in Lophophora williamsii (Peyote).